A 655-amino-acid polypeptide reads, in one-letter code: 1-deoxy-D-xylulose-5-phosphate synthase (655 aa).

Residues His73 and 114 to 116 (SHA) contribute to the thiamine diphosphate site. Asp145 contacts Mg(2+). Residues 146-147 (GA), Asn174, Tyr285, and Glu367 each bind thiamine diphosphate. Position 174 (Asn174) interacts with Mg(2+). Residues 626-655 (RQPAIEDDPTSPGEAAPAGERAGEAIGDQR) form a disordered region. A compositionally biased stretch (basic and acidic residues) spans 646–655 (RAGEAIGDQR).

It belongs to the transketolase family. DXPS subfamily. As to quaternary structure, homodimer. Mg(2+) is required as a cofactor. It depends on thiamine diphosphate as a cofactor.

The enzyme catalyses D-glyceraldehyde 3-phosphate + pyruvate + H(+) = 1-deoxy-D-xylulose 5-phosphate + CO2. It participates in metabolic intermediate biosynthesis; 1-deoxy-D-xylulose 5-phosphate biosynthesis; 1-deoxy-D-xylulose 5-phosphate from D-glyceraldehyde 3-phosphate and pyruvate: step 1/1. Functionally, catalyzes the acyloin condensation reaction between C atoms 2 and 3 of pyruvate and glyceraldehyde 3-phosphate to yield 1-deoxy-D-xylulose-5-phosphate (DXP). The chain is 1-deoxy-D-xylulose-5-phosphate synthase from Frankia casuarinae (strain DSM 45818 / CECT 9043 / HFP020203 / CcI3).